The primary structure comprises 296 residues: Bifunctional protein FolD (296 aa).

Residues 168-170 (GRS), serine 197, and threonine 238 contribute to the NADP(+) site.

This sequence belongs to the tetrahydrofolate dehydrogenase/cyclohydrolase family. Homodimer.

The catalysed reaction is (6R)-5,10-methylene-5,6,7,8-tetrahydrofolate + NADP(+) = (6R)-5,10-methenyltetrahydrofolate + NADPH. The enzyme catalyses (6R)-5,10-methenyltetrahydrofolate + H2O = (6R)-10-formyltetrahydrofolate + H(+). It functions in the pathway one-carbon metabolism; tetrahydrofolate interconversion. Its function is as follows. Catalyzes the oxidation of 5,10-methylenetetrahydrofolate to 5,10-methenyltetrahydrofolate and then the hydrolysis of 5,10-methenyltetrahydrofolate to 10-formyltetrahydrofolate. The protein is Bifunctional protein FolD of Porphyromonas gingivalis (strain ATCC BAA-308 / W83).